We begin with the raw amino-acid sequence, 558 residues long: Acylase ACY 1 proenzyme (558 aa).

T368 (nucleophile) is an active-site residue.

The protein belongs to the gamma-glutamyltransferase family. As to quaternary structure, dimer of two non-identical chains processed from the same precursor.

The catalysed reaction is (7R)-7-(4-carboxybutanamido)cephalosporanate + H2O = (7R)-7-aminocephalosporanate + glutarate. It catalyses the reaction an N-terminal (5-L-glutamyl)-[peptide] + an alpha-amino acid = 5-L-glutamyl amino acid + an N-terminal L-alpha-aminoacyl-[peptide]. The enzyme catalyses glutathione + H2O = L-cysteinylglycine + L-glutamate. It carries out the reaction an S-substituted glutathione + H2O = an S-substituted L-cysteinylglycine + L-glutamate. In terms of biological role, besides the cephalosporin acylase I activity which converts GL-7ACA into 7-ACA; this enzyme displays some gamma glutamyltranspeptidase activity. This Pseudomonas sp. (strain SE83) protein is Acylase ACY 1 proenzyme (acyI).